Here is a 446-residue protein sequence, read N- to C-terminus: 3',5'-cyclic-AMP phosphodiesterase 7B (446 aa).

Residues leucine 97–glutamine 420 enclose the PDEase domain. Residue histidine 173 is the Proton donor of the active site. Residues histidine 177, histidine 213, aspartate 214, and aspartate 323 each coordinate a divalent metal cation. The interval arginine 422 to proline 446 is disordered. A Phosphoserine modification is found at serine 426. Threonine 445 carries the phosphothreonine modification.

The protein belongs to the cyclic nucleotide phosphodiesterase family. PDE7 subfamily. A divalent metal cation serves as cofactor. In terms of tissue distribution, highly expressed in brain.

It carries out the reaction 3',5'-cyclic AMP + H2O = AMP + H(+). It participates in purine metabolism; 3',5'-cyclic AMP degradation; AMP from 3',5'-cyclic AMP: step 1/1. Inhibited by dipyridamole, IBMX and SCH 51866. Insensitive to zaprinast, rolipram, and milrinone. Its function is as follows. Hydrolyzes the second messenger cAMP, which is a key regulator of many important physiological processes. May be involved in the control of cAMP-mediated neural activity and cAMP metabolism in the brain. The chain is 3',5'-cyclic-AMP phosphodiesterase 7B from Mus musculus (Mouse).